A 329-amino-acid polypeptide reads, in one-letter code: Tryptophan--tRNA ligase (329 aa).

ATP contacts are provided by residues 9 to 11 (QPS) and 17 to 18 (GN). The 'HIGH' region signature appears at 10 to 18 (PSGTITLGN). D132 provides a ligand contact to L-tryptophan. Residues 144–146 (GDD), V183, and 192–196 (KMSKS) contribute to the ATP site. The 'KMSKS' region signature appears at 192–196 (KMSKS).

It belongs to the class-I aminoacyl-tRNA synthetase family. As to quaternary structure, homodimer.

The protein localises to the cytoplasm. It carries out the reaction tRNA(Trp) + L-tryptophan + ATP = L-tryptophyl-tRNA(Trp) + AMP + diphosphate + H(+). Its function is as follows. Catalyzes the attachment of tryptophan to tRNA(Trp). This chain is Tryptophan--tRNA ligase, found in Bacillus anthracis.